A 131-amino-acid polypeptide reads, in one-letter code: Lymphocyte antigen 6C1 (131 aa).

A signal peptide spans 1–26; sequence MDTSHTTKSCVLILLVALLCAERAQG. In terms of domain architecture, UPAR/Ly6 spans 27 to 115; the sequence is LQCYECYGVP…PTAGSTWTMA (89 aa). 5 cysteine pairs are disulfide-bonded: C29–C53, C32–C41, C46–C74, C78–C95, and C96–C101. G109 carries GPI-anchor amidated glycine lipidation. Residues 110-131 constitute a propeptide, removed in mature form; it reads STWTMAGVLLFSLSSVVLQTLL.

The protein localises to the cell membrane. This is Lymphocyte antigen 6C1 (Ly6c1) from Mus musculus (Mouse).